A 241-amino-acid chain; its full sequence is Small ribosomal subunit protein uS3 (241 aa).

The region spanning 39–107 (IREVLMKNLK…EVVINIVEVR (69 aa)) is the KH type-2 domain. The disordered stretch occupies residues 219–241 (MAELDHAGGGGGGERRRRERDAA). Over residues 231–241 (GERRRRERDAA) the composition is skewed to basic and acidic residues.

This sequence belongs to the universal ribosomal protein uS3 family. In terms of assembly, part of the 30S ribosomal subunit. Forms a tight complex with proteins S10 and S14.

Its function is as follows. Binds the lower part of the 30S subunit head. Binds mRNA in the 70S ribosome, positioning it for translation. In Beijerinckia indica subsp. indica (strain ATCC 9039 / DSM 1715 / NCIMB 8712), this protein is Small ribosomal subunit protein uS3.